Consider the following 360-residue polypeptide: SUN domain-containing protein 3 (360 aa).

Residues 1 to 10 (MSGRPNSRGS) show a composition bias toward polar residues. The disordered stretch occupies residues 1–39 (MSGRPNSRGSSRLFRAPSEDASSGSSGSAVLPQEENPNA). The Nuclear segment spans residues 1–47 (MSGRPNSRGSSRLFRAPSEDASSGSSGSAVLPQEENPNASGLTRSWK). The helical transmembrane segment at 48–67 (AVMGMVFILTLLLLGFINHM) threads the bilayer. Topologically, residues 68-360 (KLKEKAFPQK…RVHGTPKDDS (293 aa)) are perinuclear space. Residues 103-142 (KEQLELLKKESQTLENNFREILFLIEQIDVLKALLRDMQD) adopt a coiled-coil conformation. An SUN domain is found at 196–357 (GASVVEAGTS…YRFRVHGTPK (162 aa)).

Self-associates. Interacts with SYNE1 and SPAG4/SUN4. Proposed to form a spermatogenesis-specific LINC complex with SYNE1 during sperm head formation possibly implicating a SUN domain-based heterotrimer with SPAG4/SUN4 associating with SYNE1.

The protein localises to the membrane. It is found in the nucleus envelope. The protein resides in the nucleus inner membrane. In terms of biological role, as a probable component of the LINC (LInker of Nucleoskeleton and Cytoskeleton) complex, involved in the connection between the nuclear lamina and the cytoskeleton. The nucleocytoplasmic interactions established by the LINC complex play an important role in the transmission of mechanical forces across the nuclear envelope and in nuclear movement and positioning. May be involved in nuclear remodeling during sperm head formation in spermatogenesis. A probable SUN3:SYNE1 LINC complex may tether spermatid nuclei to posterior cytoskeletal structures such as the manchette. This chain is SUN domain-containing protein 3 (SUN3), found in Bos taurus (Bovine).